The primary structure comprises 297 residues: Ribosomal RNA small subunit methyltransferase A (297 aa).

S-adenosyl-L-methionine-binding residues include Asn31, Leu33, Gly58, Glu79, Asp104, and Asn129.

Belongs to the class I-like SAM-binding methyltransferase superfamily. rRNA adenine N(6)-methyltransferase family. RsmA subfamily.

It localises to the cytoplasm. The enzyme catalyses adenosine(1518)/adenosine(1519) in 16S rRNA + 4 S-adenosyl-L-methionine = N(6)-dimethyladenosine(1518)/N(6)-dimethyladenosine(1519) in 16S rRNA + 4 S-adenosyl-L-homocysteine + 4 H(+). In terms of biological role, specifically dimethylates two adjacent adenosines (A1518 and A1519) in the loop of a conserved hairpin near the 3'-end of 16S rRNA in the 30S particle. May play a critical role in biogenesis of 30S subunits. The chain is Ribosomal RNA small subunit methyltransferase A from Staphylococcus aureus (strain bovine RF122 / ET3-1).